The chain runs to 133 residues: Phosphoribosyl-ATP pyrophosphatase (133 aa).

A disordered region spans residues 1-22 (MGKPATKPAPKPSKQQDDKKSD).

It belongs to the PRA-PH family.

The protein localises to the cytoplasm. The catalysed reaction is 1-(5-phospho-beta-D-ribosyl)-ATP + H2O = 1-(5-phospho-beta-D-ribosyl)-5'-AMP + diphosphate + H(+). It functions in the pathway amino-acid biosynthesis; L-histidine biosynthesis; L-histidine from 5-phospho-alpha-D-ribose 1-diphosphate: step 2/9. In Gluconobacter oxydans (strain 621H) (Gluconobacter suboxydans), this protein is Phosphoribosyl-ATP pyrophosphatase.